The chain runs to 288 residues: Galactose/N-acetyl-D-galactosamine lectin light subunit 1 (288 aa).

The signal sequence occupies residues 1 to 15 (MIILVLLISYSFGKT). Residues Asn-205 and Asn-261 are each glycosylated (N-linked (GlcNAc...) asparagine).

In terms of assembly, heterodimer composed of a 170 kDa heavy subunit (hgl) and a 31/35 kDa light subunit (lgl); disulfide-linked.

It is found in the cell membrane. In terms of biological role, light subunit of a heterodimeric lectin; the heavy subunit binds galactose and N-acetyl-D-galactosamine of host glycoproteins and thus mediates adhesion to host cells. This is Galactose/N-acetyl-D-galactosamine lectin light subunit 1 from Entamoeba histolytica (strain ATCC 30459 / HM-1:IMSS / ABRM).